The primary structure comprises 401 residues: Transcriptional regulator Myc-2 (401 aa).

O-linked (GlcNAc) threonine glycosylation occurs at Thr58. The 9aaTAD motif lies at 76–84; sequence EMVSEFLGD. Disordered stretches follow at residues 177-251 and 286-325; these read SSKS…SRYP and LESS…HNVL. The span at 205–230 shows a compositional bias: acidic residues; that stretch reads DSEDEEEEEEEEEEEEEEEEEEEEID. A compositionally biased stretch (basic and acidic residues) spans 233 to 247; the sequence is TVEKRQKRNEAEVSD. Residues 288 to 297 are compositionally biased toward low complexity; sequence SSSSNNSSSN. The bHLH domain occupies 317–369; sequence DKRRTHNVLERQRRNELKLSFFALRDEIPEVANNEKAAKVVILKKATECIHSM. Residues 376-397 are leucine-zipper; sequence LLSIKEQLRRKSEQLKHRLQQL.

Efficient DNA binding requires dimerization with another bHLH protein. Binds DNA as a heterodimer with MAX.

The protein localises to the nucleus. In terms of biological role, transcription factor that binds DNA in a non-specific manner, yet also specifically recognizes the core sequence 5'-CAC[GA]TG-3'. Activates the transcription of growth-related genes. The polypeptide is Transcriptional regulator Myc-2 (mycb) (Cyprinus carpio (Common carp)).